The primary structure comprises 365 residues: MTIMAPRTLLLLLSGALSVTETWAGSHSMRYFSTTVSRPGRGEPRYIEVGYVDDTQFVRFDSDAASPRMEPRAPWVEQEGPEYWVLQTRNSKASAQTFRVNLQTLLGYYNQSEAGFHTIQWMYGCDLGPDGRLLRGYHQYAYDGKDYIALNEDLRSWTAADAAAQITQRKWAEANAAEGMRAYLEGTCVEWLRRHLENGKEMLQRAEPPKTHVTHHPVSDHEATLRCWALGFYPAEITLTWQRDGEDQAQDMELVETRPTGNGTFQKWAAVVVLSGEEHKYTCHVQHEGLPEPFTLRWEPPSQPTIPIMGIVAILAILGAVVTGAVVAAVMWRKKSSDKKGGSYSQAARSDSAQGSDVSLTACKV.

The N-terminal stretch at 1-24 is a signal peptide; that stretch reads MTIMAPRTLLLLLSGALSVTETWA. Residues 25 to 114 form an alpha-1 region; sequence GSHSMRYFST…LLGYYNQSEA (90 aa). Residues 25–308 are Extracellular-facing; the sequence is GSHSMRYFST…EPPSQPTIPI (284 aa). N-linked (GlcNAc...) asparagine glycosylation occurs at N110. The alpha-2 stretch occupies residues 115–206; sequence GFHTIQWMYG…ENGKEMLQRA (92 aa). 2 cysteine pairs are disulfide-bonded: C125–C188 and C227–C283. Residues 207 to 298 form an alpha-3 region; the sequence is EPPKTHVTHH…GLPEPFTLRW (92 aa). Residues 209 to 297 form the Ig-like C1-type domain; sequence PKTHVTHHPV…EGLPEPFTLR (89 aa). Residues 299–308 are connecting peptide; it reads EPPSQPTIPI. Residues 309 to 332 form a helical membrane-spanning segment; it reads MGIVAILAILGAVVTGAVVAAVMW. Over 333 to 365 the chain is Cytoplasmic; sequence RKKSSDKKGGSYSQAARSDSAQGSDVSLTACKV. Residues 337-365 are disordered; that stretch reads SDKKGGSYSQAARSDSAQGSDVSLTACKV. A compositionally biased stretch (polar residues) spans 346–359; the sequence is QAARSDSAQGSDVS. Phosphoserine is present on residues S356 and S359.

Belongs to the MHC class I family. In terms of assembly, heterodimer of an alpha chain and a beta chain (beta-2-microglobulin).

The protein localises to the membrane. Involved in the presentation of foreign antigens to the immune system. This Saguinus oedipus (Cotton-top tamarin) protein is Saoe class I histocompatibility antigen, C alpha chain.